The following is a 546-amino-acid chain: Src substrate cortactin (546 aa).

The disordered stretch occupies residues 1-28 (MWKASAGHAVSITQDDGGADDWETDPDF). Residues 17 to 28 (GGADDWETDPDF) are compositionally biased toward acidic residues. Cortactin repeat units follow at residues 80 to 116 (ASHG…SQVD), 117 to 153 (SVRG…SQKD), 154 to 190 (YSSG…SQKD), 191 to 227 (YSKG…SQKD), 228 to 264 (YVKG…SQKD), and 265 to 301 (YKTG…SQQD). Residues Lys87 and Lys107 each carry the N6-acetyllysine modification. Ser113 is modified (phosphoserine). Position 119 is an omega-N-methylarginine (Arg119). N6-acetyllysine is present on Lys124. The residue at position 144 (Lys144) is an N6-acetyllysine; alternate. Lys144 participates in a covalent cross-link: Glycyl lysine isopeptide (Lys-Gly) (interchain with G-Cter in SUMO1); alternate. A Glycyl lysine isopeptide (Lys-Gly) (interchain with G-Cter in SUMO2); alternate cross-link involves residue Lys144. Phosphoserine is present on Ser150. An N6-acetyllysine mark is found at Lys152, Lys161, and Lys171. Lys181 is subject to N6-acetyllysine; alternate. Residue Lys181 forms a Glycyl lysine isopeptide (Lys-Gly) (interchain with G-Cter in SUMO1); alternate linkage. Residue Lys181 forms a Glycyl lysine isopeptide (Lys-Gly) (interchain with G-Cter in SUMO2); alternate linkage. N6-acetyllysine is present on residues Lys193 and Lys198. A Glycyl lysine isopeptide (Lys-Gly) (interchain with G-Cter in SUMO1) cross-link involves residue Lys218. Lys235 bears the N6-acetyllysine mark. Residue Ser261 is modified to Phosphoserine. Lys272 carries the post-translational modification N6-acetyllysine. Residue Lys295 is modified to N6-acetyllysine; alternate. A Glycyl lysine isopeptide (Lys-Gly) (interchain with G-Cter in SUMO2); alternate cross-link involves residue Lys295. Residues 302 to 324 (YAKGFGGKYGVQKDRMDKNASTF) form a Cortactin 7; truncated repeat. Lys304, Lys309, Lys314, and Lys346 each carry N6-acetyllysine. A coiled-coil region spans residues 348-401 (SNIRANFENLAKEREQEDRRKAEAERAQRMAKERQEQEEARRKLEEQARAKKQT). The segment at 355 to 424 (ENLAKEREQE…PPSSPIYEDA (70 aa)) is disordered. Basic and acidic residues predominate over residues 357–396 (LAKEREQEDRRKAEAERAQRMAKERQEQEEARRKLEEQAR). Position 401 is a phosphothreonine (Thr401). Phosphoserine is present on residues Ser405, Ser407, Ser417, and Ser418. A phosphotyrosine mark is found at Tyr421 and Tyr442. Phosphoserine is present on Ser443. At Tyr466 the chain carries Phosphotyrosine; by FAK1. Phosphotyrosine; by SRC is present on residues Tyr482 and Tyr485. Residues 488 to 546 (DLGITAIALYDYQAAGDDEISFDPDDIITNIEMIDDGWWRGVCKGRYGLFPANYVELRQ) form the SH3 domain.

Part of a complex composed of NEDD9, AURKA and CTTN; within the complex NEDD9 acts as a scaffold protein and is required for complex formation. Interacts (via N-terminus) with NEDD9. Identified in a complex containing FGFR4, NCAM1, CDH2, PLCG1, FRS2, SRC, SHC1, GAP43 and CTTN. Forms a complex with ABL1 and MYLK. Interacts with SHANK2 and SHANK3 (via its SH3 domain). Interacts with PLXDC2 and SRCIN1. Interacts with SAMSN1 (via SH3 domain). Interacts (via SH3 domain) with ASAP1 (via Pro-rich region). Interacts (via SH3 domain) with DNM2. Interacts with ACTN1. Interacts with FER. Interacts with KCNA2 (via non-phosphorylated C-terminus). Interacts with FGD1. Interacts with ABL2. Interacts with CTTNBP2NL; this interaction may target CTTN to stress fibers. Interacts with CTTNBP2; this interaction may target CTTN at the cell cortex or dendritic spines. Interacts with KCNH1. Interacts (via SH3 domain) with DIP2A (via N-terminus); the interaction enhances CTTN acetylation and is required for proper synaptic transmission. Interacts with XIRP1 (via N-terminus); the interaction promotes CTTN localization to intercalated disks in cardiomyocytes. Post-translationally, acetylated. Phosphorylated by FER. Phosphorylated in response to FGR activation. Phosphorylation by SRC promotes MYLK binding. Phosphorylated on tyrosine residues in response to CHRM1 activation. Phosphorylated by PTK2/FAK1 in response to cell adhesion. Tyrosine phosphorylation in transformed cells may contribute to cellular growth regulation and transformation. Phosphorylated by PKN2 at both serine and threonine residues in a GTP-bound Rac1-dependent manner in hyaluronan-induced astrocytes and hence down-regulated CTTN ability to associate with filamentous actin. In terms of tissue distribution, expressed at intercalated disks in the heart (at protein level). Expressed in most tissues, except in B-lymphocytes or plasma cells.

It is found in the cytoplasm. Its subcellular location is the cytoskeleton. The protein localises to the cell projection. It localises to the lamellipodium. The protein resides in the ruffle. It is found in the dendrite. Its subcellular location is the cell membrane. The protein localises to the podosome. It localises to the cell junction. The protein resides in the focal adhesion. It is found in the membrane. Its subcellular location is the clathrin-coated pit. The protein localises to the dendritic spine. It localises to the cell cortex. The protein resides in the endoplasmic reticulum. Contributes to the organization of the actin cytoskeleton and cell shape. Plays a role in the formation of lamellipodia and in cell migration. Plays a role in the regulation of neuron morphology, axon growth and formation of neuronal growth cones. Through its interaction with CTTNBP2, involved in the regulation of neuronal spine density. Plays a role in focal adhesion assembly and turnover. In complex with ABL1 and MYLK regulates cortical actin-based cytoskeletal rearrangement critical to sphingosine 1-phosphate (S1P)-mediated endothelial cell (EC) barrier enhancement. Plays a role in intracellular protein transport and endocytosis, and in modulating the levels of potassium channels present at the cell membrane. Plays a role in receptor-mediated endocytosis via clathrin-coated pits. Required for stabilization of KCNH1 channels at the cell membrane. This chain is Src substrate cortactin (Cttn), found in Mus musculus (Mouse).